The chain runs to 270 residues: MLVVEGLTCRFGTKAAVDNASFSITPGGFVGVIGRSGAGKSTLLRMINRLAEPSEGRILFHDQDVTALQGQALRQWRARSAMIFQQFNLIGRLDVLTNVLMGRLAEIPSWRSLAQLWPEKDKALAMSALDQFDMAAYAAQRADQLSGGQQQRVAIARALVQQPDIVLADEPIASLDPRNTKIVMDALLRINKHFGITVICNLHSLDLARNYCDRLIGMASGRVVFDGAPEQLTDQIARELYDLEANEVMGAEHHVPGASSVPELAGAVAA.

The 244-residue stretch at 2 to 245 (LVVEGLTCRF…IARELYDLEA (244 aa)) folds into the ABC transporter domain. 34-41 (GRSGAGKS) lines the ATP pocket.

The protein belongs to the ABC transporter superfamily. Phosphonates importer (TC 3.A.1.9.1) family. The complex is composed of two ATP-binding proteins (PhnC), two transmembrane proteins (PhnE) and a solute-binding protein (PhnD).

It is found in the cell inner membrane. It carries out the reaction phosphonate(out) + ATP + H2O = phosphonate(in) + ADP + phosphate + H(+). Functionally, part of the ABC transporter complex PhnCDE involved in phosphonates import. Responsible for energy coupling to the transport system. The polypeptide is Phosphonates import ATP-binding protein PhnC 2 (Rhodopseudomonas palustris (strain BisA53)).